Consider the following 166-residue polypeptide: Ribonuclease H (166 aa).

The RNase H type-1 domain maps to 5-147 (PRKRVALFTD…VDREARRQAQ (143 aa)). Asp14, Glu52, Asp74, and Asp139 together coordinate Mg(2+). The interval 128-166 (GHTGHPENERVDREARRQAQSQAKTPCPPQAPTLFHEEA) is disordered. The span at 131–144 (GHPENERVDREARR) shows a compositional bias: basic and acidic residues.

It belongs to the RNase H family. As to quaternary structure, monomer. The cofactor is Mg(2+).

It localises to the cytoplasm. It carries out the reaction Endonucleolytic cleavage to 5'-phosphomonoester.. Its function is as follows. Endonuclease that specifically degrades the RNA of RNA-DNA hybrids. The sequence is that of Ribonuclease H from Thermus thermophilus (strain ATCC BAA-163 / DSM 7039 / HB27).